The sequence spans 594 residues: Probable methylenetetrahydrofolate reductase (NADH) (594 aa).

The Proton donor/acceptor role is filled by Glu-21. NAD(+) is bound by residues 21–26 and 52–53; these read EYFPPK and TW. FAD is bound by residues 52–53, His-81, 111–113, Tyr-153, 157–160, Asp-175, and Lys-182; these read TW, RGD, and HPDA. Residue Asp-113 participates in substrate binding. Residues Gln-193 and Tyr-285 each contribute to the substrate site.

This sequence belongs to the methylenetetrahydrofolate reductase family. In terms of assembly, homodimer. FAD serves as cofactor.

The enzyme catalyses (6S)-5-methyl-5,6,7,8-tetrahydrofolate + NAD(+) = (6R)-5,10-methylene-5,6,7,8-tetrahydrofolate + NADH + H(+). It functions in the pathway one-carbon metabolism; tetrahydrofolate interconversion. Its activity is regulated as follows. Plant MTHFRs strongly prefer NADH over NADPH. Not inhibited by methionine or S-adenosylmethionine. Its function is as follows. The probable reversibility of the MTHFR reaction in plants suggests that they can metabolize the methyl group of 5,10-methylenetetrahydrofolate to serine, sugars and starch. This is Probable methylenetetrahydrofolate reductase (NADH) from Oryza sativa subsp. japonica (Rice).